Reading from the N-terminus, the 146-residue chain is Deoxyuridine 5'-triphosphate nucleotidohydrolase (146 aa).

Residues 60-62 (RSG), Asn73, and 77-79 (VID) each bind substrate.

It belongs to the dUTPase family. Mg(2+) serves as cofactor.

The catalysed reaction is dUTP + H2O = dUMP + diphosphate + H(+). The protein operates within pyrimidine metabolism; dUMP biosynthesis; dUMP from dCTP (dUTP route): step 2/2. This enzyme is involved in nucleotide metabolism: it produces dUMP, the immediate precursor of thymidine nucleotides and it decreases the intracellular concentration of dUTP so that uracil cannot be incorporated into DNA. In Tropheryma whipplei (strain TW08/27) (Whipple's bacillus), this protein is Deoxyuridine 5'-triphosphate nucleotidohydrolase.